Reading from the N-terminus, the 196-residue chain is dTTP/UTP pyrophosphatase (196 aa).

The active-site Proton acceptor is Asp76.

The protein belongs to the Maf family. YhdE subfamily. Requires a divalent metal cation as cofactor.

The protein localises to the cytoplasm. It catalyses the reaction dTTP + H2O = dTMP + diphosphate + H(+). The enzyme catalyses UTP + H2O = UMP + diphosphate + H(+). Nucleoside triphosphate pyrophosphatase that hydrolyzes dTTP and UTP. May have a dual role in cell division arrest and in preventing the incorporation of modified nucleotides into cellular nucleic acids. This chain is dTTP/UTP pyrophosphatase, found in Chlorobium chlorochromatii (strain CaD3).